We begin with the raw amino-acid sequence, 393 residues long: Formate-dependent phosphoribosylglycinamide formyltransferase (393 aa).

N(1)-(5-phospho-beta-D-ribosyl)glycinamide-binding positions include 22–23 (EL) and glutamate 82. ATP-binding positions include arginine 114, lysine 155, 160–165 (SSGKGQ), 195–198 (EGFI), and glutamate 203. Residues 119-308 (RLAAEELKLP…QFALHARAIL (190 aa)) form the ATP-grasp domain. Positions 267 and 279 each coordinate Mg(2+). Residues aspartate 286, lysine 356, and 363 to 364 (RR) contribute to the N(1)-(5-phospho-beta-D-ribosyl)glycinamide site.

Belongs to the PurK/PurT family. Homodimer.

It carries out the reaction N(1)-(5-phospho-beta-D-ribosyl)glycinamide + formate + ATP = N(2)-formyl-N(1)-(5-phospho-beta-D-ribosyl)glycinamide + ADP + phosphate + H(+). It participates in purine metabolism; IMP biosynthesis via de novo pathway; N(2)-formyl-N(1)-(5-phospho-D-ribosyl)glycinamide from N(1)-(5-phospho-D-ribosyl)glycinamide (formate route): step 1/1. In terms of biological role, involved in the de novo purine biosynthesis. Catalyzes the transfer of formate to 5-phospho-ribosyl-glycinamide (GAR), producing 5-phospho-ribosyl-N-formylglycinamide (FGAR). Formate is provided by PurU via hydrolysis of 10-formyl-tetrahydrofolate. This chain is Formate-dependent phosphoribosylglycinamide formyltransferase, found in Pseudomonas syringae pv. syringae (strain B728a).